We begin with the raw amino-acid sequence, 1312 residues long: Rho GTPase-activating protein gacG (1312 aa).

Disordered regions lie at residues 52-74 (VENNNNNNNNNNNSENNKYKRSQ), 111-158 (SNNN…SSSD), 314-519 (ISSS…PRNF), 762-831 (NSIS…SSTG), 1185-1230 (NNNN…SSSV), and 1282-1312 (TGTSETSIHSSNSPISSSISRSPSLTDIVEE). Low complexity-rich tracts occupy residues 53–67 (ENNNNNNNNNNNSEN) and 111–146 (SNNNNSSNSSCNSTPSTSPSSTPRSTNSPRSTYSPR). Polar residues predominate over residues 147 to 158 (NNNNNFTESSSD). Low complexity-rich tracts occupy residues 328–355 (TTAAATGSSLSNSNSNSNLQNSQSANNS), 373–397 (HHSSLTHSNSNSNLISTNTSSIGNS), and 414–436 (LNLTENNLNNSSSTSSSPRNNGN). Polar residues predominate over residues 437 to 449 (EVIQSSSSTSSPR). Over residues 479-507 (SSTNSLNNSTSSLKSSNNNILQQQQQQQQ) the composition is skewed to low complexity. Composition is skewed to polar residues over residues 508 to 518 (HYDSAPTTPRN) and 763 to 776 (SISTNPLTNSGNIA). Positions 792–816 (NNNNNNNNNNNNNNNNNNNNNNNNN) are enriched in low complexity. A Rho-GAP domain is found at 1030 to 1212 (SKIDPITGFN…HHNSHHHRDN (183 aa)). Residues 1196–1210 (HHHHHHHHHNSHHHR) are compositionally biased toward basic residues. Composition is skewed to low complexity over residues 1213–1222 (NNNNSNNNSS) and 1282–1305 (TGTSETSIHSSNSPISSSISRSPS).

It is found in the cytoplasm. In terms of biological role, rho GTPase-activating protein involved in the signal transduction pathway. This is Rho GTPase-activating protein gacG (gacG) from Dictyostelium discoideum (Social amoeba).